Here is a 501-residue protein sequence, read N- to C-terminus: Lysine--tRNA ligase (501 aa).

Residues Glu411 and Glu418 each contribute to the Mg(2+) site.

It belongs to the class-II aminoacyl-tRNA synthetase family. As to quaternary structure, homodimer. Mg(2+) is required as a cofactor.

The protein resides in the cytoplasm. The enzyme catalyses tRNA(Lys) + L-lysine + ATP = L-lysyl-tRNA(Lys) + AMP + diphosphate. The chain is Lysine--tRNA ligase from Shewanella woodyi (strain ATCC 51908 / MS32).